The following is a 182-amino-acid chain: Early nodulin-like protein 14 (182 aa).

An N-terminal signal peptide occupies residues Met1–Ala28. Residues Asn29 to Ser133 enclose the Phytocyanin domain. A disulfide bond links Cys87 and Cys121. 2 N-linked (GlcNAc...) asparagine glycosylation sites follow: Asn88 and Asn95. The GPI-anchor amidated serine moiety is linked to residue Ser160. A propeptide spans Gly161–Phe182 (removed in mature form).

The protein belongs to the early nodulin-like (ENODL) family. Interacts strongly and specifically with the extracellular domain of FERONIA at the synergid cell surface. As to expression, mostly expressed in seedlings and flowers, and, to a lower extent, in roots, stems and seeds, but barely in leaves.

It is found in the cell membrane. Functionally, may act as a carbohydrate transporter. Required, together with ENODL11, ENODL12, ENODL13, ENODL14 and ENODL15, for male-female communication and pollen tube reception and burst at the synergid cell surface of the female gametophyte. This chain is Early nodulin-like protein 14, found in Arabidopsis thaliana (Mouse-ear cress).